A 139-amino-acid chain; its full sequence is D-ribose pyranase (139 aa).

The active-site Proton donor is His-20. Substrate contacts are provided by residues Asp-28, His-106, and 128 to 130; that span reads YAN.

The protein belongs to the RbsD / FucU family. RbsD subfamily. In terms of assembly, homodecamer.

It is found in the cytoplasm. It catalyses the reaction beta-D-ribopyranose = beta-D-ribofuranose. It functions in the pathway carbohydrate metabolism; D-ribose degradation; D-ribose 5-phosphate from beta-D-ribopyranose: step 1/2. In terms of biological role, catalyzes the interconversion of beta-pyran and beta-furan forms of D-ribose. The polypeptide is D-ribose pyranase (Haemophilus influenzae (strain PittGG)).